The chain runs to 861 residues: MISEENFQQHTPMMQQYLKLKAENPDILLFYRMGDFYELFYDDAKKAAALLDISLTKRGQSAGQPIPMAGMPYHAVEGYLAKLVQLGESVAICEQIGDPSTSKGPVERQIVRIVTPGTVSDEALLPERQDNLIAAVYQEKEKFGLATLDMTSGRFQLCEPADKETLRAELQRIVPVELLYCEEFNEMAAIEHCKGLRRRPIWEFELSTAITLLNRQFGTKDLRAFGVEKSPLGLSAAGCLLQYAKETQRTALPHIQSISLIQNQDCIQLDAATRRNLELTQNLSGGTENTLASVLDKCVTPMGSRLLKRWIHQPIRDVEKLKQRQQAIAEILNFDLVDELQPYLQLVGDMERILARVALRSARPRDLTRLRTALEQIPALRTIVQQKTSPFLTALFSQIADFSEQWDLLQRALIETPPLLIRDGGVIAEGYHAELDEWRMLSDGATQYLENLEKRERESTGIDTLKIGFNAVHGYYIQISQGQAHKAPIHYVRRQTLKNAERYIIPELKEYEDKVLKSKGAALALEKQLYDELFDLLLPHLGSLQLASLALSELDVLVNLAECADTLNYVMPTFCDEVSVKIENGRHPVVEQVLKDPFIANPVELNHNRHLLIITGPNMGGKSTYMRQTALITLLAYIGSFVPADSARIGPIDRIFTRIGASDDLASGRSTFMVEMTEMANILHQATEQSLVLIDEIGRGTSTYDGLSLAWACAEWLAKKIRSLTLFATHYFELTALPEQLEGIANIHLDALEHNNSIAFMHAVQDGAASKSYGLAVAALAGVPQSVIKLAKQKLTQLEKNSSYSAEQQIQALREANHNQGELLFEQETDALREAIEKLDPDDLSPKQALAYLYQLKKMVG.

G616–S623 lines the ATP pocket.

The protein belongs to the DNA mismatch repair MutS family.

Functionally, this protein is involved in the repair of mismatches in DNA. It is possible that it carries out the mismatch recognition step. This protein has a weak ATPase activity. This is DNA mismatch repair protein MutS from Haemophilus influenzae (strain 86-028NP).